Here is a 476-residue protein sequence, read N- to C-terminus: Cardiolipin synthase (476 aa).

2 helical membrane passes run 2 to 22 (HLFI…IIFI) and 31 to 51 (WAWI…YILF). PLD phosphodiesterase domains follow at residues 207–234 (INYR…GDEY) and 389–416 (EKGF…DIRS). Catalysis depends on residues His212, Lys214, Asp219, His394, Lys396, and Asp401.

Belongs to the phospholipase D family. Cardiolipin synthase subfamily.

The protein resides in the cell membrane. The catalysed reaction is 2 a 1,2-diacyl-sn-glycero-3-phospho-(1'-sn-glycerol) = a cardiolipin + glycerol. Its function is as follows. Catalyzes the reversible phosphatidyl group transfer from one phosphatidylglycerol molecule to another to form cardiolipin (CL) (diphosphatidylglycerol) and glycerol. The chain is Cardiolipin synthase (cls) from Clostridium perfringens (strain ATCC 13124 / DSM 756 / JCM 1290 / NCIMB 6125 / NCTC 8237 / Type A).